The sequence spans 343 residues: S-adenosylmethionine:tRNA ribosyltransferase-isomerase (343 aa).

Belongs to the QueA family. In terms of assembly, monomer.

The protein localises to the cytoplasm. It catalyses the reaction 7-aminomethyl-7-carbaguanosine(34) in tRNA + S-adenosyl-L-methionine = epoxyqueuosine(34) in tRNA + adenine + L-methionine + 2 H(+). It participates in tRNA modification; tRNA-queuosine biosynthesis. Transfers and isomerizes the ribose moiety from AdoMet to the 7-aminomethyl group of 7-deazaguanine (preQ1-tRNA) to give epoxyqueuosine (oQ-tRNA). This Dehalococcoides mccartyi (strain ATCC BAA-2100 / JCM 16839 / KCTC 5957 / BAV1) protein is S-adenosylmethionine:tRNA ribosyltransferase-isomerase.